The following is a 135-amino-acid chain: Putative pre-16S rRNA nuclease (135 aa).

It belongs to the YqgF nuclease family.

It localises to the cytoplasm. Could be a nuclease involved in processing of the 5'-end of pre-16S rRNA. This chain is Putative pre-16S rRNA nuclease, found in Buchnera aphidicola subsp. Acyrthosiphon pisum (strain 5A).